Reading from the N-terminus, the 253-residue chain is Type III pantothenate kinase (253 aa).

Residue 6 to 13 (DVGNTNTV) coordinates ATP. Residue 103 to 106 (GADR) participates in substrate binding. The Proton acceptor role is filled by aspartate 105. Aspartate 125 contributes to the K(+) binding site. Threonine 128 is a binding site for ATP. Position 180 (threonine 180) interacts with substrate.

Belongs to the type III pantothenate kinase family. As to quaternary structure, homodimer. NH4(+) is required as a cofactor. Requires K(+) as cofactor.

The protein localises to the cytoplasm. The enzyme catalyses (R)-pantothenate + ATP = (R)-4'-phosphopantothenate + ADP + H(+). The protein operates within cofactor biosynthesis; coenzyme A biosynthesis; CoA from (R)-pantothenate: step 1/5. In terms of biological role, catalyzes the phosphorylation of pantothenate (Pan), the first step in CoA biosynthesis. This chain is Type III pantothenate kinase, found in Parafrankia sp. (strain EAN1pec).